Reading from the N-terminus, the 945-residue chain is Probable inorganic carbon transporter subunit DabA (945 aa).

The Zn(2+) site is built by Cys408, Asp410, His651, and Cys666.

It belongs to the inorganic carbon transporter (TC 9.A.2) DabA family. Forms a complex with DabB. It depends on Zn(2+) as a cofactor.

The protein resides in the cell inner membrane. In terms of biological role, part of an energy-coupled inorganic carbon pump. This Sulfurihydrogenibium azorense (strain DSM 15241 / OCM 825 / Az-Fu1) protein is Probable inorganic carbon transporter subunit DabA.